A 133-amino-acid polypeptide reads, in one-letter code: Small ribosomal subunit protein uS15 (133 aa).

This sequence belongs to the universal ribosomal protein uS15 family. In terms of assembly, part of the 30S ribosomal subunit.

The chain is Small ribosomal subunit protein uS15 from Methanosphaera stadtmanae (strain ATCC 43021 / DSM 3091 / JCM 11832 / MCB-3).